A 432-amino-acid polypeptide reads, in one-letter code: MGNNVVVLGTQWGDEGKGKIVDLLTERAKYVVRYQGGHNAGHTLVINGEKTVLHLIPSGILRDNVTSIIGNGVVLSPAALMKEMKELEDRGIPVRERLLLSEACPLILDYHVALDVAREKARGAKAIGTTGRGIGPAYEDKVARRGLRVGDLFDKATFAEKLKEVLEYHNFQLVNFYKVEAVDYQKVLDDVMAIADVLTSMVVDVSDLLDQARKRGDFIMFEGAQGTLLDIDHGTYPYVTSSNTTAGGVATGSGIGPRYVDYVLGIIKAYSTRVGAGPFPTELFDDIGEFLCKKGNEFGATTGRRRRTGWLDAVAVRRAVQINSLSGFCLTKLDVLDGLEEVKICVAYRMPDGREVTTTPMAADDWEGIEPIYETMPGWSESTFGVKERSGLPQAALNYIKRIEEVTGVPIDIISTGPDRTETMILRDPFDA.

GTP contacts are provided by residues Gly13 to Lys19 and Gly41 to Thr43. Asp14 serves as the catalytic Proton acceptor. Positions 14 and 41 each coordinate Mg(2+). IMP-binding positions include Asp14–Lys17, Asn39–His42, Thr130, Arg144, Gln225, Thr240, and Arg304. The Proton donor role is filled by His42. Residue Ala300–Arg306 coordinates substrate. GTP is bound by residues Arg306, Lys332–Asp334, and Ser415–Gly417.

This sequence belongs to the adenylosuccinate synthetase family. As to quaternary structure, homodimer. Mg(2+) serves as cofactor.

Its subcellular location is the cytoplasm. The catalysed reaction is IMP + L-aspartate + GTP = N(6)-(1,2-dicarboxyethyl)-AMP + GDP + phosphate + 2 H(+). It participates in purine metabolism; AMP biosynthesis via de novo pathway; AMP from IMP: step 1/2. Functionally, plays an important role in the de novo pathway of purine nucleotide biosynthesis. Catalyzes the first committed step in the biosynthesis of AMP from IMP. This Cronobacter sakazakii (strain ATCC BAA-894) (Enterobacter sakazakii) protein is Adenylosuccinate synthetase.